Consider the following 62-residue polypeptide: Enterocin E-760 (62 aa).

It is found in the secreted. In terms of biological role, bacteriocin active against the Gram-negative bacteria S.enteritidis, S.choleraesuis, S.typhimurium, S.gallinarum, E.coli O157:H7, Y.enterocolitica, C.freundii, K.pneumoniae, S.dysentriae, P.aeruginosa, P.mirabilis, M.morganii, C.jejuni and 20 other Campylobacter isolates, and the Gram-positive bacteria S.aureus, S.epidermidis and L.monocytogenes. This is Enterocin E-760 from Enterococcus sp.